The primary structure comprises 316 residues: WEB family protein At3g13190 (316 aa).

Coiled-coil stretches lie at residues 42 to 90 (WNKE…MIND), 119 to 195 (EEES…AEEH), and 233 to 266 (RDET…MAQE). Positions 295-316 (STKEVLKSKPRSSSKEGCLVKC) are disordered.

This sequence belongs to the WEB family.

This chain is WEB family protein At3g13190, found in Arabidopsis thaliana (Mouse-ear cress).